Consider the following 103-residue polypeptide: MADQKIQIRLKAFDCRLIDRSAGEIVETAKRTGAHVRGPIPLPTKIERCTILVSPHADKDARDQYETCTYKRVLYIVDPNDKTVDALMKLELAAGVDVQIKLT.

This sequence belongs to the universal ribosomal protein uS10 family. In terms of assembly, part of the 30S ribosomal subunit.

Its function is as follows. Involved in the binding of tRNA to the ribosomes. The chain is Small ribosomal subunit protein uS10 from Xylella fastidiosa (strain 9a5c).